Consider the following 81-residue polypeptide: Beta-toxin Ct13 (81 aa).

An N-terminal signal peptide occupies residues 1–18 (MKVLILIIASVLLIGVEC). One can recognise an LCN-type CS-alpha/beta domain in the interval 19–78 (KDGFPVDSEGCILLPCATRAYCSVNCKFMKGSGGSCDTLACHCKGLPEDAKVQDKPTNKC). Disulfide bonds link cysteine 29–cysteine 78, cysteine 34–cysteine 54, cysteine 40–cysteine 59, and cysteine 44–cysteine 61. A Cysteine amide modification is found at cysteine 78.

Belongs to the long (4 C-C) scorpion toxin superfamily. Sodium channel inhibitor family. Beta subfamily. As to expression, expressed by the venom gland.

The protein localises to the secreted. Functionally, beta toxins bind voltage-independently at site-4 of sodium channels (Nav) and shift the voltage of activation toward more negative potentials thereby affecting sodium channel activation and promoting spontaneous and repetitive firing. The protein is Beta-toxin Ct13 of Centruroides tecomanus (Scorpion).